The chain runs to 218 residues: Thiamine-phosphate synthase (218 aa).

4-amino-2-methyl-5-(diphosphooxymethyl)pyrimidine-binding positions include 43–47 and Asn78; that span reads QFRDK. Residues Asp79 and Asp98 each contribute to the Mg(2+) site. 4-amino-2-methyl-5-(diphosphooxymethyl)pyrimidine is bound at residue Ser117. 143–145 serves as a coordination point for 2-[(2R,5Z)-2-carboxy-4-methylthiazol-5(2H)-ylidene]ethyl phosphate; it reads TNS. Lys146 is a binding site for 4-amino-2-methyl-5-(diphosphooxymethyl)pyrimidine. Residues Gly174 and 194-195 each bind 2-[(2R,5Z)-2-carboxy-4-methylthiazol-5(2H)-ylidene]ethyl phosphate; that span reads IS.

Belongs to the thiamine-phosphate synthase family. Requires Mg(2+) as cofactor.

It catalyses the reaction 2-[(2R,5Z)-2-carboxy-4-methylthiazol-5(2H)-ylidene]ethyl phosphate + 4-amino-2-methyl-5-(diphosphooxymethyl)pyrimidine + 2 H(+) = thiamine phosphate + CO2 + diphosphate. It carries out the reaction 2-(2-carboxy-4-methylthiazol-5-yl)ethyl phosphate + 4-amino-2-methyl-5-(diphosphooxymethyl)pyrimidine + 2 H(+) = thiamine phosphate + CO2 + diphosphate. The catalysed reaction is 4-methyl-5-(2-phosphooxyethyl)-thiazole + 4-amino-2-methyl-5-(diphosphooxymethyl)pyrimidine + H(+) = thiamine phosphate + diphosphate. It participates in cofactor biosynthesis; thiamine diphosphate biosynthesis; thiamine phosphate from 4-amino-2-methyl-5-diphosphomethylpyrimidine and 4-methyl-5-(2-phosphoethyl)-thiazole: step 1/1. Condenses 4-methyl-5-(beta-hydroxyethyl)thiazole monophosphate (THZ-P) and 2-methyl-4-amino-5-hydroxymethyl pyrimidine pyrophosphate (HMP-PP) to form thiamine monophosphate (TMP). This chain is Thiamine-phosphate synthase, found in Lactococcus lactis subsp. cremoris (strain SK11).